Here is a 300-residue protein sequence, read N- to C-terminus: 4-diphosphocytidyl-2-C-methyl-D-erythritol kinase (300 aa).

K17 is a catalytic residue. 102-112 (PVAAGIGGGSA) is an ATP binding site. The active site involves D144.

The protein belongs to the GHMP kinase family. IspE subfamily.

The catalysed reaction is 4-CDP-2-C-methyl-D-erythritol + ATP = 4-CDP-2-C-methyl-D-erythritol 2-phosphate + ADP + H(+). It functions in the pathway isoprenoid biosynthesis; isopentenyl diphosphate biosynthesis via DXP pathway; isopentenyl diphosphate from 1-deoxy-D-xylulose 5-phosphate: step 3/6. Functionally, catalyzes the phosphorylation of the position 2 hydroxy group of 4-diphosphocytidyl-2C-methyl-D-erythritol. The sequence is that of 4-diphosphocytidyl-2-C-methyl-D-erythritol kinase from Bradyrhizobium sp. (strain ORS 278).